We begin with the raw amino-acid sequence, 630 residues long: MALIEQLQSSEQSILSPFRYYGFKDFHNVIFTTIDDETLIVITVNNVPLVTRLITFEKITFFRSFNSTCIITSNNNSDIDTDTYFIPNSLSLLDILKKRAYDVELRDLSFAIMSEMNNDELRNSDIVSLNKWLHKHNLLDYKLVLISDIDRRYKLYNKKNTIIDVISVNGRNYNIWVKDVIEYYSPEYLRWSIDIKRATESNNWLPYSQSINPLNENIYAFEFIATLERSNERLNIGAIFLYPDIIITGRNNEDIIEKFLDQLEEVIYKKNSDSIVLTGYHLTFLENTILERYISKYKDWIFTCNRLVHCKTGTEVFLFDAAIFFPSSNKKGYVKHWTGKKLNFKNFFQKDSQLEKYINNNSVAERIYYLQSSLHKHISCLIEIFELNGFDFNFSGLLDILIFSIRVKNNNGNYYYPKHSSAVNLMLSSIYTDYYAIDDIDKDSKKLVFNSIFPLIMEGYYPEGKPYYTKTPKEGYLSICLCDVEISNDIKNPILYCKENKSARKFTGVFTSVDIDTAVKLRGYKIKILECIEWPNKIKLFDNICYLNKLFIEHQDYTHDEKSLQGYLFSYLLKGNVTEDVLAMKSCRNNLSIISFIISYCRNYTYKLLECPVYESSNIVKCKYNQVIYK.

The protein belongs to the poxviridae F12 protein family. In terms of processing, not glycosylated or contains very little carbohydrate.

It is found in the virion membrane. Its subcellular location is the host endosome. Functionally, late protein that plays a role in intracellular enveloped virus (IEV) transport to the cell surface on microtubules. When absent, viral morphogenesis halts after the formation of IEV particles, and these are not transported to the cell periphery. Important for plaque formation, extracellular envelope virus (EEV) production and virulence. The protein is Virion release protein of Fowlpox virus (strain NVSL) (FPV).